Here is a 230-residue protein sequence, read N- to C-terminus: Thymidylate synthase 1 (230 aa).

92–93 (RR) lines the dUMP pocket. Cys-112 (nucleophile) is an active-site residue. Residues 132–135 (RSND), Asn-143, and 173–175 (HVY) contribute to the dUMP site. Position 135 (Asp-135) interacts with (6R)-5,10-methylene-5,6,7,8-tetrahydrofolate.

The protein belongs to the thymidylate synthase family. Bacterial-type ThyA subfamily. As to quaternary structure, homodimer.

The protein localises to the cytoplasm. It catalyses the reaction dUMP + (6R)-5,10-methylene-5,6,7,8-tetrahydrofolate = 7,8-dihydrofolate + dTMP. It participates in pyrimidine metabolism; dTTP biosynthesis. In terms of biological role, catalyzes the reductive methylation of 2'-deoxyuridine-5'-monophosphate (dUMP) to 2'-deoxythymidine-5'-monophosphate (dTMP) while utilizing 5,10-methylenetetrahydrofolate (mTHF) as the methyl donor and reductant in the reaction, yielding dihydrofolate (DHF) as a by-product. This enzymatic reaction provides an intracellular de novo source of dTMP, an essential precursor for DNA biosynthesis. This is Thymidylate synthase 1 from Bacillus amyloliquefaciens (Bacillus velezensis).